Consider the following 157-residue polypeptide: Succinate dehydrogenase assembly factor 2-B, mitochondrial (157 aa).

The N-terminal 22 residues, 1–22 (MLSQWFRGRHLVVRSALFSRRR), are a transit peptide targeting the mitochondrion.

Belongs to the SDHAF2 family. Interacts with the flavoprotein subunit within the SDH catalytic dimer.

The protein localises to the mitochondrion matrix. Its function is as follows. Plays an essential role in the assembly of succinate dehydrogenase (SDH), an enzyme complex (also referred to as respiratory complex II) that is a component of both the tricarboxylic acid (TCA) cycle and the mitochondrial electron transport chain, and which couples the oxidation of succinate to fumarate with the reduction of ubiquinone (coenzyme Q) to ubiquinol. Required for flavinylation (covalent attachment of FAD) of the flavoprotein subunit of the SDH catalytic dimer. The chain is Succinate dehydrogenase assembly factor 2-B, mitochondrial from Drosophila mojavensis (Fruit fly).